The chain runs to 961 residues: Glycine dehydrogenase (decarboxylating) (961 aa).

K709 bears the N6-(pyridoxal phosphate)lysine mark.

It belongs to the GcvP family. The glycine cleavage system is composed of four proteins: P, T, L and H. It depends on pyridoxal 5'-phosphate as a cofactor.

It carries out the reaction N(6)-[(R)-lipoyl]-L-lysyl-[glycine-cleavage complex H protein] + glycine + H(+) = N(6)-[(R)-S(8)-aminomethyldihydrolipoyl]-L-lysyl-[glycine-cleavage complex H protein] + CO2. Its function is as follows. The glycine cleavage system catalyzes the degradation of glycine. The P protein binds the alpha-amino group of glycine through its pyridoxal phosphate cofactor; CO(2) is released and the remaining methylamine moiety is then transferred to the lipoamide cofactor of the H protein. The chain is Glycine dehydrogenase (decarboxylating) from Teredinibacter turnerae (strain ATCC 39867 / T7901).